Here is a 95-residue protein sequence, read N- to C-terminus: Large ribosomal subunit protein uL23 (95 aa).

Belongs to the universal ribosomal protein uL23 family. Part of the 50S ribosomal subunit. Contacts protein L29, and trigger factor when it is bound to the ribosome.

One of the early assembly proteins it binds 23S rRNA. One of the proteins that surrounds the polypeptide exit tunnel on the outside of the ribosome. Forms the main docking site for trigger factor binding to the ribosome. This Heliobacterium modesticaldum (strain ATCC 51547 / Ice1) protein is Large ribosomal subunit protein uL23.